The chain runs to 985 residues: Alanine--tRNA ligase, mitochondrial (985 aa).

The transit peptide at 1–23 directs the protein to the mitochondrion; sequence MAASVAAAAGRLRRAIGRSCPWQ. ATP is bound by residues Arg105, His123, Trp205, and 235 to 237; that span reads LWN. L-alanine contacts are provided by Asn237 and Asp260. An ATP-binding site is contributed by Gly264. Positions 632, 636, 749, and 753 each coordinate Zn(2+).

The protein belongs to the class-II aminoacyl-tRNA synthetase family. In terms of assembly, monomer. Zn(2+) is required as a cofactor.

Its subcellular location is the mitochondrion. The enzyme catalyses tRNA(Ala) + L-alanine + ATP = L-alanyl-tRNA(Ala) + AMP + diphosphate. The catalysed reaction is (S)-lactate + ATP + H(+) = (S)-lactoyl-AMP + diphosphate. It catalyses the reaction (S)-lactoyl-AMP + L-lysyl-[protein] = N(6)-[(S)-lactoyl]-L-lysyl-[protein] + AMP + 2 H(+). Functionally, catalyzes the attachment of alanine to tRNA(Ala) in a two-step reaction: alanine is first activated by ATP to form Ala-AMP and then transferred to the acceptor end of tRNA(Ala). Also edits incorrectly charged tRNA(Ala) via its editing domain. In presence of high levels of lactate, also acts as a protein lactyltransferase that mediates lactylation of lysine residues in target proteins, such as CGAS. Acts as an inhibitor of cGAS/STING signaling by catalyzing lactylation of CGAS, preventing the formation of liquid-like droplets in which CGAS is activated. This Rattus norvegicus (Rat) protein is Alanine--tRNA ligase, mitochondrial (Aars2).